The following is a 488-amino-acid chain: NAD-reducing hydrogenase HoxS subunit beta (488 aa).

Residues Cys62, Cys65, Cys458, and Cys461 each coordinate Ni(2+).

This sequence belongs to the [NiFe]/[NiFeSe] hydrogenase large subunit family. In terms of assembly, tetramer of an alpha and a gamma subunits (flavin-containing dimer), and a delta and a nickel-containing beta subunits (hydrogenase dimer). FMN is required as a cofactor. Requires Ni(2+) as cofactor.

It localises to the cytoplasm. It catalyses the reaction H2 + NAD(+) = NADH + H(+). This is NAD-reducing hydrogenase HoxS subunit beta (hoxH) from Cupriavidus necator (strain ATCC 17699 / DSM 428 / KCTC 22496 / NCIMB 10442 / H16 / Stanier 337) (Ralstonia eutropha).